Here is a 363-residue protein sequence, read N- to C-terminus: Pyrimidine monooxygenase RutA (363 aa).

Residues 49–50, Asn-115, Glu-124, 140–141, and Ser-190 contribute to the FMN site; these read IK and RY.

Belongs to the NtaA/SnaA/DszA monooxygenase family. RutA subfamily.

It carries out the reaction uracil + FMNH2 + NADH + O2 = (Z)-3-ureidoacrylate + FMN + NAD(+) + H2O + H(+). It catalyses the reaction thymine + FMNH2 + NADH + O2 = (Z)-2-methylureidoacrylate + FMN + NAD(+) + H2O + H(+). Its function is as follows. Catalyzes the pyrimidine ring opening between N-3 and C-4 by an unusual flavin hydroperoxide-catalyzed mechanism, adding oxygen atoms in the process to yield ureidoacrylate peracid, that immediately reacts with FMN forming ureidoacrylate and FMN-N(5)-oxide. The FMN-N(5)-oxide reacts spontaneously with NADH to produce FMN. Requires the flavin reductase RutF to regenerate FMN in vivo. The protein is Pyrimidine monooxygenase RutA of Rhizobium rhizogenes (strain K84 / ATCC BAA-868) (Agrobacterium radiobacter).